Reading from the N-terminus, the 2134-residue chain is Genome polyprotein (2134 aa).

Residues 1–1377 (MSKLFSTVGR…WLFEKIKTSK (1377 aa)) are Cytoplasmic-facing. The LRAT domain maps to 781–882 (IVICSGEKAK…GDYGTKEGEK (102 aa)). Catalysis depends on residues His791 and His802. Cys863 functions as the Acyl-thioester intermediate in the catalytic mechanism. The region spanning 1127–1289 (LNKLGRLDKP…EEFSTHAMLD (163 aa)) is the SF3 helicase domain. Residue 1153–1160 (GNRGGGKS) participates in ATP binding. An intramembrane segment occupies 1378–1392 (WYILGCVGAALSVSV). Residues 1393–2134 (LGVFAYHMIK…VKDRVIDDSF (742 aa)) lie on the Cytoplasmic side of the membrane. The residue at position 1415 (Tyr1415) is an O-(5'-phospho-RNA)-tyrosine. Residues 1431–1643 (DAQSVVDISN…ITKEMIEEML (213 aa)) enclose the Peptidase C3 domain. Residues His1477, Asp1515, and Cys1603 each act as for protease 3C activity in the active site. One can recognise a RdRp catalytic domain in the interval 1880-2001 (DLVVGLDFSN…CIKKESLDQK (122 aa)).

This sequence belongs to the picornaviridae polyprotein family. Specific enzymatic cleavages by the viral protease in vivo yield a variety of precursors and mature proteins. During virion maturation, non-infectious particles are rendered infectious following cleavage of VP0. This maturation cleavage is followed by a conformational change of the particle. In terms of processing, VPg is uridylylated by the polymerase and is covalently linked to the 5'-end of genomic RNA. This uridylylated form acts as a nucleotide-peptide primer for the polymerase.

The protein resides in the virion. Its subcellular location is the host cytoplasm. The protein localises to the host cytoplasmic vesicle membrane. The catalysed reaction is RNA(n) + a ribonucleoside 5'-triphosphate = RNA(n+1) + diphosphate. The enzyme catalyses a ribonucleoside 5'-triphosphate + H2O = a ribonucleoside 5'-diphosphate + phosphate + H(+). It catalyses the reaction Selective cleavage of Gln-|-Gly bond in the poliovirus polyprotein. In other picornavirus reactions Glu may be substituted for Gln, and Ser or Thr for Gly.. Capsid proteins VP1, VP2, and VP3 form a closed capsid enclosing the viral positive strand RNA genome. All these proteins contain a beta-sheet structure called beta-barrel jelly roll. Together they form an icosahedral capsid (T=3) composed of 60 copies of each VP1, VP2, and VP3, with a diameter of approximately 300 Angstroms. VP1 is situated at the 12 fivefold axes, whereas VP2 and VP3 are located at the quasi-sixfold axes. Functionally, VP0 precursor is a component of immature procapsids. The N-terminal domain of VP0, protein VP4, is needed for the assembly of 12 pentamers into the icosahedral structure. Unlike other picornaviruses, AEV VP4 may not be myristoylated. Its function is as follows. Protein 2B and 2BC precursor affect membrane integrity and cause an increase in membrane permeability. In terms of biological role, associates with and induces structural rearrangements of intracellular membranes. It displays RNA-binding, nucleotide binding and NTPase activities. Protein 3A, via its hydrophobic domain, serves as membrane anchor. Functionally, protein 3B is covalently linked to the 5'-end of both the positive-strand and negative-strand genomic RNAs. It acts as a genome-linked replication primer. Its function is as follows. Cysteine protease that generates mature viral proteins from the precursor polyprotein. In addition to its proteolytic activity, it binds to viral RNA, and thus influences viral genome replication. RNA and substrate bind cooperatively to the protease. In terms of biological role, RNA-directed RNA polymerase 3D-POL replicates genomic and antigenomic RNA by recognizing replications specific signals. The sequence is that of Genome polyprotein from Avian encephalomyelitis virus (strain L2Z) (AEV).